Consider the following 239-residue polypeptide: Probable transcriptional regulatory protein LMOf2365_0385 (239 aa).

This sequence belongs to the TACO1 family. YeeN subfamily.

It is found in the cytoplasm. This chain is Probable transcriptional regulatory protein LMOf2365_0385, found in Listeria monocytogenes serotype 4b (strain F2365).